The primary structure comprises 238 residues: COMM domain-containing protein 10 homolog Vlet (238 aa).

Residues 43–77 (ASASATSSTVGTSVTTTGRVDSSTEENPTSNTEPE) show a composition bias toward low complexity. The disordered stretch occupies residues 43-78 (ASASATSSTVGTSVTTTGRVDSSTEENPTSNTEPEY). The COMM domain occupies 161–225 (VIEDVAWKLN…SIQGELDAML (65 aa)).

This sequence belongs to the COMM domain-containing protein 10 family. As to quaternary structure, component of the commander complex consisting of the CCC subcomplex and the retriever subcomplex. Component of the CCC subcomplex. Interacts with Smn; along with Sbat and Hez may form an accessory subcomplex involved in SMN complex function.

Functionally, scaffold protein in the commander complex that is essential for endosomal recycling of transmembrane cargos; the commander complex is composed of the CCC subcomplex and the retriever subcomplex. May modulate activity of cullin-RING E3 ubiquitin ligase (CRL) complexes. May down-regulate activation of NF-kappa-B. May have an accessory function in the survival motor neuron (SMN) complex. Required for neuromuscular function and organismal viability. The protein is COMM domain-containing protein 10 homolog Vlet of Drosophila melanogaster (Fruit fly).